The following is a 139-amino-acid chain: Transcriptional regulator WhiB5 (139 aa).

In terms of domain architecture, 4Fe-4S Wbl-type spans 4–77 (PCATDPELWF…AGIKLPGGQY (74 aa)). Cys5, Cys41, Cys45, and Cys53 together coordinate [4Fe-4S] cluster.

The protein belongs to the WhiB family. The cofactor is [4Fe-4S] cluster. Post-translationally, the Fe-S cluster can be nitrosylated by nitric oxide (NO). Upon Fe-S cluster removal intramolecular disulfide bonds are formed.

It localises to the cytoplasm. Its function is as follows. A transcription factor that is probably redox-responsive. Probably plays a role in immunomodulation and reactivation after chronic infection. Its induction results in transcription of a number of genes including sigM, and the genes for 2 type VII secretion systems ESX-2 and ESX-4. Seems to negatively regulate its own expression. The apo-form has been shown to act as a protein disulfide reductase. The apo- but not holo-form probably binds DNA. This Mycobacterium tuberculosis (strain ATCC 25618 / H37Rv) protein is Transcriptional regulator WhiB5 (whiB5).